The primary structure comprises 75 residues: uncharacterized protein (75 aa).

This is an uncharacterized protein from Homo sapiens (Human).